Here is a 396-residue protein sequence, read N- to C-terminus: Elongation factor Tu (396 aa).

In terms of domain architecture, tr-type G spans 10-206 (KPHCNIGTIG…AVDAYIPQPE (197 aa)). The G1 stretch occupies residues 19–26 (GHVDHGKT). Position 19-26 (19-26 (GHVDHGKT)) interacts with GTP. T26 serves as a coordination point for Mg(2+). Residues 60-64 (GITIS) form a G2 region. The segment at 81–84 (DCPG) is G3. GTP-binding positions include 81-85 (DCPGH) and 136-139 (NKVD). Residues 136–139 (NKVD) form a G4 region. The segment at 174–176 (SAL) is G5.

The protein belongs to the TRAFAC class translation factor GTPase superfamily. Classic translation factor GTPase family. EF-Tu/EF-1A subfamily. As to quaternary structure, monomer.

It localises to the cytoplasm. It carries out the reaction GTP + H2O = GDP + phosphate + H(+). GTP hydrolase that promotes the GTP-dependent binding of aminoacyl-tRNA to the A-site of ribosomes during protein biosynthesis. The polypeptide is Elongation factor Tu (Gluconacetobacter diazotrophicus (strain ATCC 49037 / DSM 5601 / CCUG 37298 / CIP 103539 / LMG 7603 / PAl5)).